The primary structure comprises 110 residues: Large ribosomal subunit protein uL22 (110 aa).

It belongs to the universal ribosomal protein uL22 family. In terms of assembly, part of the 50S ribosomal subunit.

This protein binds specifically to 23S rRNA; its binding is stimulated by other ribosomal proteins, e.g. L4, L17, and L20. It is important during the early stages of 50S assembly. It makes multiple contacts with different domains of the 23S rRNA in the assembled 50S subunit and ribosome. In terms of biological role, the globular domain of the protein is located near the polypeptide exit tunnel on the outside of the subunit, while an extended beta-hairpin is found that lines the wall of the exit tunnel in the center of the 70S ribosome. In Paraburkholderia phytofirmans (strain DSM 17436 / LMG 22146 / PsJN) (Burkholderia phytofirmans), this protein is Large ribosomal subunit protein uL22.